Consider the following 421-residue polypeptide: UDP-N-acetylglucosamine 1-carboxyvinyltransferase (421 aa).

23 to 24 (KN) lines the phosphoenolpyruvate pocket. Arg-92 lines the UDP-N-acetyl-alpha-D-glucosamine pocket. Cys-116 functions as the Proton donor in the catalytic mechanism. Cys-116 is subject to 2-(S-cysteinyl)pyruvic acid O-phosphothioketal. Residues 121 to 125 (RPVDL), 161 to 164 (KVSV), Asp-306, and Ile-328 contribute to the UDP-N-acetyl-alpha-D-glucosamine site.

It belongs to the EPSP synthase family. MurA subfamily.

It localises to the cytoplasm. The catalysed reaction is phosphoenolpyruvate + UDP-N-acetyl-alpha-D-glucosamine = UDP-N-acetyl-3-O-(1-carboxyvinyl)-alpha-D-glucosamine + phosphate. The protein operates within cell wall biogenesis; peptidoglycan biosynthesis. Cell wall formation. Adds enolpyruvyl to UDP-N-acetylglucosamine. This chain is UDP-N-acetylglucosamine 1-carboxyvinyltransferase, found in Vibrio vulnificus (strain CMCP6).